The sequence spans 370 residues: Putative alanine racemase 2 (370 aa).

Lys38 acts as the Proton acceptor; specific for D-alanine in catalysis. At Lys38 the chain carries N6-(pyridoxal phosphate)lysine. Tyr266 serves as the catalytic Proton acceptor; specific for L-alanine.

The protein belongs to the alanine racemase family. Pyridoxal 5'-phosphate serves as cofactor.

It carries out the reaction L-alanine = D-alanine. The protein is Putative alanine racemase 2 (alr2) of Schizosaccharomyces pombe (strain 972 / ATCC 24843) (Fission yeast).